The following is a 130-amino-acid chain: UPF0212 protein PF1486 (130 aa).

It belongs to the UPF0212 family.

The chain is UPF0212 protein PF1486 from Pyrococcus furiosus (strain ATCC 43587 / DSM 3638 / JCM 8422 / Vc1).